The sequence spans 58 residues: Large ribosomal subunit protein uL30 (58 aa).

The protein belongs to the universal ribosomal protein uL30 family. As to quaternary structure, part of the 50S ribosomal subunit.

This is Large ribosomal subunit protein uL30 from Buchnera aphidicola subsp. Baizongia pistaciae (strain Bp).